The following is a 715-amino-acid chain: Dynein axonemal intermediate chain 7 (715 aa).

A disordered region spans residues Ala-291–Val-322. Positions Asp-295–Gly-318 are enriched in basic and acidic residues.

The protein belongs to the DNAI7 family. In terms of assembly, part of the multisubunit axonemal dynein complex formed at least of two heavy chains and a number of intermediate and light chains. Associates with tubulin. Interacts with microtubule. Post-translationally, ubiquitinated. Ubiquitination leads to its degradation through the 26S proteasome. Ubiquitin-proteasome-mediated DNAI7 degradation occurs in mitosis.

The protein localises to the cell projection. Its subcellular location is the cilium. It localises to the cytoplasm. Via its association with the multisubunit axonemal dynein complex, is potentially involved in the regulation of cilia function. May act as a cell cycle regulator. The sequence is that of Dynein axonemal intermediate chain 7 from Bos taurus (Bovine).